The chain runs to 310 residues: MKTLTRNISRTAITVALVILAFIAISRAWVFYTESPWTRDARFSADIVAIAPDVAGLITAVNVRDNQLVKKDQVLFTIDQPRYQKALEESEADVAYYQALTTEKRREAGRRNKLGIQAMSREEIDQSNNLLQTVLHQLAKAEATRDLAKLDLERTVIRAPSDGWVTNLNVYTGEFITRGSTAVALVKQHSFYVLAYMEETKLEGVRPGYRAEITPLGSNRVLKGTVDSIAAGVTNSSATRDSKGMATVDSNLEWVRLAQRVPVRIRLDDEQGNLWPAGTTATVVITGEKDRNASNDSLFRKIAHRLREFG.

The helical transmembrane segment at 12 to 32 threads the bilayer; the sequence is AITVALVILAFIAISRAWVFY.

It belongs to the membrane fusion protein (MFP) (TC 8.A.1) family.

It is found in the cell inner membrane. In terms of biological role, forms an efflux pump with AaeB. This Enterobacter sp. (strain 638) protein is p-hydroxybenzoic acid efflux pump subunit AaeA.